Reading from the N-terminus, the 206-residue chain is FMN-dependent NADH:quinone oxidoreductase (206 aa).

FMN-binding positions include 15-17 (SVS), 94-97 (MYNF), and 138-141 (TRGG).

It belongs to the azoreductase type 1 family. Homodimer. It depends on FMN as a cofactor.

The enzyme catalyses 2 a quinone + NADH + H(+) = 2 a 1,4-benzosemiquinone + NAD(+). It catalyses the reaction N,N-dimethyl-1,4-phenylenediamine + anthranilate + 2 NAD(+) = 2-(4-dimethylaminophenyl)diazenylbenzoate + 2 NADH + 2 H(+). Its function is as follows. Quinone reductase that provides resistance to thiol-specific stress caused by electrophilic quinones. Functionally, also exhibits azoreductase activity. Catalyzes the reductive cleavage of the azo bond in aromatic azo compounds to the corresponding amines. The protein is FMN-dependent NADH:quinone oxidoreductase of Sinorhizobium medicae (strain WSM419) (Ensifer medicae).